We begin with the raw amino-acid sequence, 326 residues long: Transcription cofactor vestigial-like protein 3 (326 aa).

The segment at 54–82 (SLEVTLPSKQEEEEEEEEDEEEEEKDQPA) is disordered. Lysine 62 is covalently cross-linked (Glycyl lysine isopeptide (Lys-Gly) (interchain with G-Cter in SUMO2)). Positions 64-78 (EEEEEEEEDEEEEEK) are enriched in acidic residues. Lysine 129 is covalently cross-linked (Glycyl lysine isopeptide (Lys-Gly) (interchain with G-Cter in SUMO2)). Residues 184–208 (TADPNSWPGHGLHQTGPAPPPTASE) are disordered.

This sequence belongs to the vestigial family.

The protein resides in the nucleus. In terms of biological role, may act as a specific coactivator for the mammalian TEFs. The polypeptide is Transcription cofactor vestigial-like protein 3 (Mus musculus (Mouse)).